The chain runs to 831 residues: Multiphosphoryl transfer protein (831 aa).

An HPr domain is found at 1–90 (MLTIQFLCPL…EYIQVRFIDS (90 aa)). The active-site Pros-phosphohistidine intermediate; for HPr activity is the histidine 15. Histidine 15 is modified (phosphohistidine; by EI). The tract at residues 119–650 (GNVLASGVGV…AVKSQLRQLD (532 aa)) is PTS EI. Histidine 298 functions as the Tele-phosphohistidine intermediate; for PTS EI activity in the catalytic mechanism. Position 298 is a phosphohistidine; by autocatalysis (histidine 298). Positions 405 and 441 each coordinate phosphoenolpyruvate. Glutamate 540 and aspartate 564 together coordinate Mg(2+). Phosphoenolpyruvate-binding positions include 563 to 564 (ND) and arginine 574. Catalysis depends on cysteine 611, which acts as the Proton donor; for EI activity. Positions 685–828 (PLLALENIFV…QSILTLLETE (144 aa)) constitute a PTS EIIA type-2 domain. The Tele-phosphohistidine intermediate; for PTS EIIA activity role is filled by histidine 747. A Phosphohistidine; by HPr modification is found at histidine 747.

It belongs to the PEP-utilizing enzyme family. Mg(2+) is required as a cofactor.

Its subcellular location is the cytoplasm. The enzyme catalyses L-histidyl-[protein] + phosphoenolpyruvate = N(pros)-phospho-L-histidyl-[protein] + pyruvate. The catalysed reaction is D-fructose(out) + N(pros)-phospho-L-histidyl-[protein] = D-fructose 1-phosphate(in) + L-histidyl-[protein]. In terms of biological role, multifunctional protein that includes general (non sugar-specific) and sugar-specific components of the phosphoenolpyruvate-dependent sugar phosphotransferase system (sugar PTS). This major carbohydrate active transport system catalyzes the phosphorylation of incoming sugar substrates concomitantly with their translocation across the cell membrane. The enzyme II FryABC PTS system is involved in fructose transport. In Escherichia coli O6:H1 (strain CFT073 / ATCC 700928 / UPEC), this protein is Multiphosphoryl transfer protein (fryA).